A 365-amino-acid polypeptide reads, in one-letter code: Flagellar P-ring protein (365 aa).

Positions methionine 1–alanine 19 are cleaved as a signal peptide.

It belongs to the FlgI family. In terms of assembly, the basal body constitutes a major portion of the flagellar organelle and consists of four rings (L,P,S, and M) mounted on a central rod.

Its subcellular location is the periplasm. It localises to the bacterial flagellum basal body. Its function is as follows. Assembles around the rod to form the L-ring and probably protects the motor/basal body from shearing forces during rotation. In Shigella dysenteriae serotype 1 (strain Sd197), this protein is Flagellar P-ring protein.